The chain runs to 144 residues: Ferredoxin-thioredoxin reductase catalytic chain, chloroplastic (144 aa).

Residues 1 to 31 (MKALQASIAYSFPISSPAASPRRFSRVIRAQ) constitute a chloroplast transit peptide. Residue Cys83 coordinates [4Fe-4S] cluster. Cys85 acts as the Nucleophile in catalysis. A disulfide bridge links Cys85 with Cys115. [4Fe-4S] cluster is bound by residues Cys102, Cys104, and Cys113.

Belongs to the ferredoxin thioredoxin reductase beta subunit family. As to quaternary structure, heterodimer of subunit A (variable subunit) and subunit B (catalytic subunit). Heterodimeric FTR forms a complex with ferredoxin and thioredoxin. [4Fe-4S] cluster is required as a cofactor.

It is found in the plastid. It localises to the chloroplast. It catalyses the reaction [thioredoxin]-disulfide + 2 reduced [2Fe-2S]-[ferredoxin] + 2 H(+) = [thioredoxin]-dithiol + 2 oxidized [2Fe-2S]-[ferredoxin]. Its function is as follows. Catalytic subunit of the ferredoxin-thioredoxin reductase (FTR), which catalyzes the two-electron reduction of thioredoxins by the electrons provided by reduced ferredoxin. This is Ferredoxin-thioredoxin reductase catalytic chain, chloroplastic (FTRC) from Spinacia oleracea (Spinach).